The chain runs to 85 residues: Large ribosomal subunit protein bL27 (85 aa).

Belongs to the bacterial ribosomal protein bL27 family.

This is Large ribosomal subunit protein bL27 from Pseudomonas fluorescens (strain ATCC BAA-477 / NRRL B-23932 / Pf-5).